A 179-amino-acid polypeptide reads, in one-letter code: Large ribosomal subunit protein uL6 (179 aa).

This sequence belongs to the universal ribosomal protein uL6 family. As to quaternary structure, part of the 50S ribosomal subunit.

Its function is as follows. This protein binds to the 23S rRNA, and is important in its secondary structure. It is located near the subunit interface in the base of the L7/L12 stalk, and near the tRNA binding site of the peptidyltransferase center. The polypeptide is Large ribosomal subunit protein uL6 (Prochlorococcus marinus (strain MIT 9515)).